The chain runs to 187 residues: Acireductone dioxygenase (187 aa).

His-90, His-92, Glu-96, and His-135 together coordinate Fe(2+). Positions 90, 92, 96, and 135 each coordinate Ni(2+).

It belongs to the acireductone dioxygenase (ARD) family. It depends on Fe(2+) as a cofactor. Ni(2+) is required as a cofactor.

It is found in the cytoplasm. Its subcellular location is the nucleus. It carries out the reaction 1,2-dihydroxy-5-(methylsulfanyl)pent-1-en-3-one + O2 = 4-methylsulfanyl-2-oxobutanoate + formate + 2 H(+). The enzyme catalyses 1,2-dihydroxy-5-(methylsulfanyl)pent-1-en-3-one + O2 = 3-(methylsulfanyl)propanoate + CO + formate + 2 H(+). It participates in amino-acid biosynthesis; L-methionine biosynthesis via salvage pathway; L-methionine from S-methyl-5-thio-alpha-D-ribose 1-phosphate: step 5/6. Catalyzes 2 different reactions between oxygen and the acireductone 1,2-dihydroxy-3-keto-5-methylthiopentene (DHK-MTPene) depending upon the metal bound in the active site. Fe-containing acireductone dioxygenase (Fe-ARD) produces formate and 2-keto-4-methylthiobutyrate (KMTB), the alpha-ketoacid precursor of methionine in the methionine recycle pathway. Ni-containing acireductone dioxygenase (Ni-ARD) produces methylthiopropionate, carbon monoxide and formate, and does not lie on the methionine recycle pathway. This Drosophila pseudoobscura pseudoobscura (Fruit fly) protein is Acireductone dioxygenase.